The following is a 428-amino-acid chain: Glutamate-1-semialdehyde 2,1-aminomutase 1 (428 aa).

An N6-(pyridoxal phosphate)lysine modification is found at K267.

This sequence belongs to the class-III pyridoxal-phosphate-dependent aminotransferase family. HemL subfamily. Homodimer. The cofactor is pyridoxal 5'-phosphate.

The protein resides in the cytoplasm. It catalyses the reaction (S)-4-amino-5-oxopentanoate = 5-aminolevulinate. It participates in porphyrin-containing compound metabolism; protoporphyrin-IX biosynthesis; 5-aminolevulinate from L-glutamyl-tRNA(Glu): step 2/2. The chain is Glutamate-1-semialdehyde 2,1-aminomutase 1 from Staphylococcus aureus (strain bovine RF122 / ET3-1).